The sequence spans 490 residues: tRNA-guanine(15) transglycosylase (490 aa).

Aspartate 92 functions as the Nucleophile in the catalytic mechanism. Aspartate 127 and alanine 195 together coordinate substrate. Zn(2+) contacts are provided by cysteine 278, cysteine 280, and cysteine 283.

Belongs to the archaeosine tRNA-ribosyltransferase family. Requires Zn(2+) as cofactor.

It catalyses the reaction guanosine(15) in tRNA + 7-cyano-7-deazaguanine = 7-cyano-7-carbaguanosine(15) in tRNA + guanine. The protein operates within tRNA modification; archaeosine-tRNA biosynthesis. Functionally, exchanges the guanine residue with 7-cyano-7-deazaguanine (preQ0) at position 15 in the dihydrouridine loop (D-loop) of archaeal tRNAs. The polypeptide is tRNA-guanine(15) transglycosylase (Haloarcula marismortui (strain ATCC 43049 / DSM 3752 / JCM 8966 / VKM B-1809) (Halobacterium marismortui)).